Here is a 72-residue protein sequence, read N- to C-terminus: Translation initiation factor IF-1 (72 aa).

One can recognise an S1-like domain in the interval 1–72 (MAKEDVIEIE…TRGRITYRFK (72 aa)).

It belongs to the IF-1 family. As to quaternary structure, component of the 30S ribosomal translation pre-initiation complex which assembles on the 30S ribosome in the order IF-2 and IF-3, IF-1 and N-formylmethionyl-tRNA(fMet); mRNA recruitment can occur at any time during PIC assembly.

It is found in the cytoplasm. Functionally, one of the essential components for the initiation of protein synthesis. Stabilizes the binding of IF-2 and IF-3 on the 30S subunit to which N-formylmethionyl-tRNA(fMet) subsequently binds. Helps modulate mRNA selection, yielding the 30S pre-initiation complex (PIC). Upon addition of the 50S ribosomal subunit IF-1, IF-2 and IF-3 are released leaving the mature 70S translation initiation complex. The protein is Translation initiation factor IF-1 of Streptococcus suis (strain 05ZYH33).